Consider the following 326-residue polypeptide: tRNA-modifying protein YgfZ (326 aa).

Folate contacts are provided by tryptophan 27 and tryptophan 189.

The protein belongs to the tRNA-modifying YgfZ family.

It localises to the cytoplasm. In terms of biological role, folate-binding protein involved in regulating the level of ATP-DnaA and in the modification of some tRNAs. It is probably a key factor in regulatory networks that act via tRNA modification, such as initiation of chromosomal replication. This chain is tRNA-modifying protein YgfZ, found in Escherichia coli O45:K1 (strain S88 / ExPEC).